The sequence spans 559 residues: Regulatory protein PHO2 (559 aa).

Disordered regions lie at residues 16–88, 132–158, 293–333, and 534–559; these read ATDL…KGEA, LRKK…DYDR, INSN…AKDN, and PTDS…HRWI. Low complexity-rich tracts occupy residues 24–52 and 63–74; these read HDQQ…IQTQ and NDMSASSNASDS. A DNA-binding region (homeobox) is located at residues 77–136; the sequence is QRPKRTRAKGEALDVLKRKFEINPTPSLVERKKISDLIGMPEKNVRIWFQNRRAKLRKKQ. Over residues 141–151 the composition is skewed to polar residues; sequence KDTIPSSQSRD. Low complexity predominate over residues 293–307; that stretch reads INSNNTSDKNNSNTN. The segment covering 308–323 has biased composition (acidic residues); sequence NDDDNDDNSNEDNDNS. The segment covering 324 to 333 has biased composition (basic and acidic residues); that stretch reads SEDKRNAKDN. Threonine 542 is modified (phosphothreonine).

The protein resides in the nucleus. Regulator in phosphate metabolism and acts as a derepressor of another central regulator PHO5. Binds to the upstream activator sequence (UAS) of PHO5. It also binds to the TRP4, HIS4, and CYC1 promoters. This chain is Regulatory protein PHO2 (PHO2), found in Saccharomyces cerevisiae (strain ATCC 204508 / S288c) (Baker's yeast).